The chain runs to 242 residues: Glutamate transport ATP-binding protein GluA (242 aa).

In terms of domain architecture, ABC transporter spans I2–L236. G34–S41 serves as a coordination point for ATP.

Belongs to the ABC transporter superfamily. The complex is composed of two ATP-binding proteins (GluA), two transmembrane proteins (GluC and GluD) and a solute-binding protein (GluB).

It is found in the cell membrane. The catalysed reaction is a polar amino acid(out) + ATP + H2O = a polar amino acid(in) + ADP + phosphate + H(+). It catalyses the reaction L-glutamate(out) + ATP + H2O = L-glutamate(in) + ADP + phosphate + H(+). Its function is as follows. Part of the ABC transporter complex GluABCD involved in glutamate uptake. Probably responsible for energy coupling to the transport system. This chain is Glutamate transport ATP-binding protein GluA, found in Corynebacterium efficiens (strain DSM 44549 / YS-314 / AJ 12310 / JCM 11189 / NBRC 100395).